We begin with the raw amino-acid sequence, 237 residues long: Ribosomal RNA small subunit methyltransferase G (237 aa).

Residues glycine 78, phenylalanine 83, 129-130 (AE), and arginine 148 contribute to the S-adenosyl-L-methionine site. The segment at 218–237 (KKETPNKYPRKAGMPNKRPL) is disordered.

It belongs to the methyltransferase superfamily. RNA methyltransferase RsmG family.

Its subcellular location is the cytoplasm. Functionally, specifically methylates the N7 position of a guanine in 16S rRNA. This chain is Ribosomal RNA small subunit methyltransferase G, found in Streptococcus pneumoniae serotype 19F (strain G54).